We begin with the raw amino-acid sequence, 372 residues long: Aminomethyltransferase (372 aa).

This sequence belongs to the GcvT family. In terms of assembly, the glycine cleavage system is composed of four proteins: P, T, L and H.

The catalysed reaction is N(6)-[(R)-S(8)-aminomethyldihydrolipoyl]-L-lysyl-[protein] + (6S)-5,6,7,8-tetrahydrofolate = N(6)-[(R)-dihydrolipoyl]-L-lysyl-[protein] + (6R)-5,10-methylene-5,6,7,8-tetrahydrofolate + NH4(+). Functionally, the glycine cleavage system catalyzes the degradation of glycine. The protein is Aminomethyltransferase of Prochlorococcus marinus (strain NATL2A).